The chain runs to 126 residues: Large-conductance mechanosensitive channel (126 aa).

2 consecutive transmembrane segments (helical) span residues Val14–Leu34 and Gly69–Val89.

It belongs to the MscL family. As to quaternary structure, homopentamer.

The protein localises to the cell membrane. Channel that opens in response to stretch forces in the membrane lipid bilayer. May participate in the regulation of osmotic pressure changes within the cell. The protein is Large-conductance mechanosensitive channel of Leuconostoc citreum (strain KM20).